The chain runs to 226 residues: Phosphate propanoyltransferase (226 aa).

CoA is bound at residue 44–46; sequence VSN. 2 residues coordinate Zn(2+): histidine 48 and histidine 50. Methionine 72, lysine 90, and arginine 97 together coordinate CoA. Arginine 103 is a binding site for phosphate. Residue glutamate 109 participates in Zn(2+) binding. Phenylalanine 116 is a CoA binding site. Residues histidine 157, histidine 159, and histidine 204 each coordinate Zn(2+). Asparagine 211 contributes to the CoA binding site.

The protein belongs to the PduL family. As to quaternary structure, full-length protein forms large oligomers. Homodimer, when purified in the absence of the encapsulation peptide (EP, residues 1-47). The EP may influence oligomerization. It depends on Zn(2+) as a cofactor.

The protein localises to the bacterial microcompartment. The enzyme catalyses propanoyl-CoA + phosphate = propanoyl phosphate + CoA. The protein operates within polyol metabolism; 1,2-propanediol degradation. Functionally, involved in 1,2-propanediol (1,2-PD) utilization within the bacterial microcompartment (BMC) dedicated to 1,2-PD degradation by catalyzing the conversion of propanoyl-CoA to propanoyl-phosphate. CoA is regenerated within the pdu BMC (for use by PduP) via this enzyme, although there must also be cofactor transport across the BMC. Directly targeted to the BMC. Phosphate is probably the first substrate to bind in the forward direction. CoA is probably the first substrate to bind in the reverse direction, and might bind to the enzyme as the BMC assembles, ensuring cofactor encapsulation. This chain is Phosphate propanoyltransferase, found in Rhodopseudomonas palustris (strain BisB18).